The following is a 61-amino-acid chain: Small ribosomal subunit protein uS14B (61 aa).

Zn(2+) contacts are provided by C24, C27, C40, and C43.

The protein belongs to the universal ribosomal protein uS14 family. Zinc-binding uS14 subfamily. In terms of assembly, part of the 30S ribosomal subunit. Contacts proteins S3 and S10. Zn(2+) serves as cofactor.

Its function is as follows. Binds 16S rRNA, required for the assembly of 30S particles and may also be responsible for determining the conformation of the 16S rRNA at the A site. The chain is Small ribosomal subunit protein uS14B from Listeria welshimeri serovar 6b (strain ATCC 35897 / DSM 20650 / CCUG 15529 / CIP 8149 / NCTC 11857 / SLCC 5334 / V8).